A 234-amino-acid polypeptide reads, in one-letter code: MVSKFDTQHLLNSNTALVAGVDEAGRGPLAGPVVVAAVVFDPSQPHINGLNDSKQLSPACRERLYAHIVERALAYKVVMIDSTQIDTLNIYQATMLGMRLAVEGVAHVAKSARIDGNRLPKNLPCPAEALVGGDARDPTIMAASILAKVTRDRHMVELHLQYPHYGFDKHKGYGTPAHLAALAEHGPCLEHRQSFAPVRRMLTPKAIHARQSAHQHNENSPTKAAFNMLIERDD.

Residues A16 to I207 enclose the RNase H type-2 domain. Residues D22, E23, and D115 each contribute to the a divalent metal cation site.

It belongs to the RNase HII family. The cofactor is Mn(2+). Mg(2+) is required as a cofactor.

It localises to the cytoplasm. It catalyses the reaction Endonucleolytic cleavage to 5'-phosphomonoester.. Endonuclease that specifically degrades the RNA of RNA-DNA hybrids. The chain is Ribonuclease HII from Xylella fastidiosa (strain M23).